The primary structure comprises 101 residues: CYC02 protein (101 aa).

Residues 42–64 (DAVCHHGCCRWFHHRCVRCCRSA) form a 1; approximate repeat. Residues 42–101 (DAVCHHGCCRWFHHRCVRCCRSAEEVSVSDTENNAAADAHCRHGCCRWFHGRCIRCCPSA) form a 2 X approximate repeats region. A 2; approximate repeat occupies 79 to 101 (DAHCRHGCCRWFHGRCIRCCPSA).

Belongs to the GRP family.

In terms of biological role, may be involved in the control of the cell cycle at the G1/S start transition. The protein is CYC02 protein (CYC02) of Catharanthus roseus (Madagascar periwinkle).